Consider the following 97-residue polypeptide: MKRICSVYKSPRKNEMYLYVDKREALSRVPEALLVPFGAPQHVFDLLLTPERQLAREDVAKVLENIEKQGFHLQMPPGEEEYIEHLPEELLRMNDPL.

Residues 3–87 (RICSVYKSPR…GEEEYIEHLP (85 aa)) form the YcgL domain.

In Pseudomonas aeruginosa (strain UCBPP-PA14), this protein is YcgL domain-containing protein PA14_47450.